Reading from the N-terminus, the 1076-residue chain is Vacuolar membrane protease (1076 aa).

The Cytoplasmic portion of the chain corresponds to Met1–Pro11. The helical transmembrane segment at Met12 to Ile32 threads the bilayer. Residues His33–Thr437 are Vacuolar-facing. 3 N-linked (GlcNAc...) asparagine glycosylation sites follow: Asn50, Asn99, and Asn156. His220 and Asp232 together coordinate Zn(2+). Glu266 functions as the Proton acceptor in the catalytic mechanism. Residues Glu267, Glu292, and His364 each contribute to the Zn(2+) site. A helical membrane pass occupies residues Leu438–Tyr458. The Cytoplasmic portion of the chain corresponds to Leu459–Ala491. Residues Phe492–Ile512 form a helical membrane-spanning segment. The Vacuolar segment spans residues Asn513–Tyr525. The helical transmembrane segment at Ala526–Cys546 threads the bilayer. Residues Asn547–Arg556 are Cytoplasmic-facing. Residues Gly557–Tyr577 form a helical membrane-spanning segment. The Vacuolar portion of the chain corresponds to Glu578–Ser584. The helical transmembrane segment at Gly585–Cys605 threads the bilayer. Residues Glu606–Tyr738 are Cytoplasmic-facing. Disordered regions lie at residues Asp619–Val662 and Ser701–Gly720. The segment covering Gln621–His632 has biased composition (basic and acidic residues). Positions Pro647 to Glu660 are enriched in acidic residues. The chain crosses the membrane as a helical span at residues Leu739–Ala759. Over Leu760–Phe771 the chain is Vacuolar. Residues Leu772–Ile792 form a helical membrane-spanning segment. Residues His793–Met799 lie on the Cytoplasmic side of the membrane. A helical transmembrane segment spans residues Pro800–Phe820. Topologically, residues Ser821–Val1076 are vacuolar. Asn912 carries N-linked (GlcNAc...) asparagine glycosylation.

It belongs to the peptidase M28 family. It depends on Zn(2+) as a cofactor.

It localises to the vacuole membrane. In terms of biological role, may be involved in vacuolar sorting and osmoregulation. The polypeptide is Vacuolar membrane protease (Sclerotinia sclerotiorum (strain ATCC 18683 / 1980 / Ss-1) (White mold)).